We begin with the raw amino-acid sequence, 459 residues long: Cysteine--tRNA ligase (459 aa).

C27 is a binding site for Zn(2+). Residues 29-39 carry the 'HIGH' region motif; the sequence is PTVYNFVHIGN. Positions 211, 236, and 240 each coordinate Zn(2+). The 'KMSKS' region motif lies at 269–273; it reads KMSKS. Residue K272 coordinates ATP.

It belongs to the class-I aminoacyl-tRNA synthetase family. In terms of assembly, monomer. Zn(2+) serves as cofactor.

Its subcellular location is the cytoplasm. It catalyses the reaction tRNA(Cys) + L-cysteine + ATP = L-cysteinyl-tRNA(Cys) + AMP + diphosphate. In Ehrlichia canis (strain Jake), this protein is Cysteine--tRNA ligase.